Reading from the N-terminus, the 328-residue chain is 4-hydroxy-3-methylbut-2-enyl diphosphate reductase (328 aa).

Residue Cys-13 coordinates [4Fe-4S] cluster. The (2E)-4-hydroxy-3-methylbut-2-enyl diphosphate site is built by His-41 and His-75. Dimethylallyl diphosphate contacts are provided by His-41 and His-75. Positions 41 and 75 each coordinate isopentenyl diphosphate. Residue Cys-97 participates in [4Fe-4S] cluster binding. Residue His-125 participates in (2E)-4-hydroxy-3-methylbut-2-enyl diphosphate binding. His-125 contacts dimethylallyl diphosphate. His-125 is an isopentenyl diphosphate binding site. The active-site Proton donor is Glu-127. (2E)-4-hydroxy-3-methylbut-2-enyl diphosphate is bound at residue Thr-168. Cys-229 is a binding site for [4Fe-4S] cluster. Residues Ser-257, Ser-258, Asn-259, and Ser-306 each coordinate (2E)-4-hydroxy-3-methylbut-2-enyl diphosphate. Ser-257, Ser-258, Asn-259, and Ser-306 together coordinate dimethylallyl diphosphate. Positions 257, 258, 259, and 306 each coordinate isopentenyl diphosphate.

The protein belongs to the IspH family. Requires [4Fe-4S] cluster as cofactor.

The catalysed reaction is isopentenyl diphosphate + 2 oxidized [2Fe-2S]-[ferredoxin] + H2O = (2E)-4-hydroxy-3-methylbut-2-enyl diphosphate + 2 reduced [2Fe-2S]-[ferredoxin] + 2 H(+). The enzyme catalyses dimethylallyl diphosphate + 2 oxidized [2Fe-2S]-[ferredoxin] + H2O = (2E)-4-hydroxy-3-methylbut-2-enyl diphosphate + 2 reduced [2Fe-2S]-[ferredoxin] + 2 H(+). It participates in isoprenoid biosynthesis; dimethylallyl diphosphate biosynthesis; dimethylallyl diphosphate from (2E)-4-hydroxy-3-methylbutenyl diphosphate: step 1/1. It functions in the pathway isoprenoid biosynthesis; isopentenyl diphosphate biosynthesis via DXP pathway; isopentenyl diphosphate from 1-deoxy-D-xylulose 5-phosphate: step 6/6. Its function is as follows. Catalyzes the conversion of 1-hydroxy-2-methyl-2-(E)-butenyl 4-diphosphate (HMBPP) into a mixture of isopentenyl diphosphate (IPP) and dimethylallyl diphosphate (DMAPP). Acts in the terminal step of the DOXP/MEP pathway for isoprenoid precursor biosynthesis. This chain is 4-hydroxy-3-methylbut-2-enyl diphosphate reductase, found in Chlorobium phaeobacteroides (strain DSM 266 / SMG 266 / 2430).